We begin with the raw amino-acid sequence, 492 residues long: Probable malate:quinone oxidoreductase 1 (492 aa).

Belongs to the MQO family. It depends on FAD as a cofactor.

It catalyses the reaction (S)-malate + a quinone = a quinol + oxaloacetate. The protein operates within carbohydrate metabolism; tricarboxylic acid cycle; oxaloacetate from (S)-malate (quinone route): step 1/1. The protein is Probable malate:quinone oxidoreductase 1 of Staphylococcus epidermidis (strain ATCC 35984 / DSM 28319 / BCRC 17069 / CCUG 31568 / BM 3577 / RP62A).